Reading from the N-terminus, the 246-residue chain is ABC transporter ATP-binding protein NatA (246 aa).

One can recognise an ABC transporter domain in the interval 2–237; that stretch reads ITLTDCSRRF…ERSEDLNYIF (236 aa). 38-45 is a binding site for ATP; sequence GENGAGKT.

This sequence belongs to the ABC transporter superfamily. As to quaternary structure, the complex is composed of NatA and NatB.

The enzyme catalyses Na(+)(in) + ATP + H2O = Na(+)(out) + ADP + phosphate + H(+). Part of an ABC transporter that catalyzes ATP-dependent electrogenic sodium extrusion. In Bacillus subtilis (strain 168), this protein is ABC transporter ATP-binding protein NatA.